Consider the following 602-residue polypeptide: Translation factor GUF1 homolog, organellar chromatophore (602 aa).

The tr-type G domain occupies 7-189; the sequence is SRIRNFCIIA…AIVERIPPPV (183 aa). Residues 16–23, 82–86, and 136–139 contribute to the GTP site; these read AHIDHGKS, DTPGH, and NKID.

It belongs to the TRAFAC class translation factor GTPase superfamily. Classic translation factor GTPase family. LepA subfamily.

It localises to the plastid. It is found in the organellar chromatophore. The catalysed reaction is GTP + H2O = GDP + phosphate + H(+). Functionally, promotes protein synthesis. May act as a fidelity factor of the translation reaction, by catalyzing a one-codon backward translocation of tRNAs on improperly translocated ribosomes. The polypeptide is Translation factor GUF1 homolog, organellar chromatophore (Paulinella chromatophora).